A 103-amino-acid polypeptide reads, in one-letter code: Co-chaperonin GroES (103 aa).

The protein belongs to the GroES chaperonin family. Heptamer of 7 subunits arranged in a ring. Interacts with the chaperonin GroEL.

Its subcellular location is the cytoplasm. In terms of biological role, together with the chaperonin GroEL, plays an essential role in assisting protein folding. The GroEL-GroES system forms a nano-cage that allows encapsulation of the non-native substrate proteins and provides a physical environment optimized to promote and accelerate protein folding. GroES binds to the apical surface of the GroEL ring, thereby capping the opening of the GroEL channel. This chain is Co-chaperonin GroES, found in Trichodesmium erythraeum (strain IMS101).